A 629-amino-acid polypeptide reads, in one-letter code: 1-deoxy-D-xylulose-5-phosphate synthase (629 aa).

Thiamine diphosphate-binding positions include His72 and 113–115 (GHA). A Mg(2+)-binding site is contributed by Asp144. Thiamine diphosphate contacts are provided by residues 145–146 (GA), Asn174, Tyr287, and Glu370. A Mg(2+)-binding site is contributed by Asn174.

The protein belongs to the transketolase family. DXPS subfamily. Homodimer. Requires Mg(2+) as cofactor. The cofactor is thiamine diphosphate.

It carries out the reaction D-glyceraldehyde 3-phosphate + pyruvate + H(+) = 1-deoxy-D-xylulose 5-phosphate + CO2. Its pathway is metabolic intermediate biosynthesis; 1-deoxy-D-xylulose 5-phosphate biosynthesis; 1-deoxy-D-xylulose 5-phosphate from D-glyceraldehyde 3-phosphate and pyruvate: step 1/1. Catalyzes the acyloin condensation reaction between C atoms 2 and 3 of pyruvate and glyceraldehyde 3-phosphate to yield 1-deoxy-D-xylulose-5-phosphate (DXP). This chain is 1-deoxy-D-xylulose-5-phosphate synthase, found in Prochlorococcus marinus (strain MIT 9215).